Reading from the N-terminus, the 317-residue chain is Probable porphobilinogen deaminase (317 aa).

Cys-234 carries the S-(dipyrrolylmethanemethyl)cysteine modification.

The protein belongs to the HMBS family. Requires dipyrromethane as cofactor.

The catalysed reaction is 4 porphobilinogen + H2O = hydroxymethylbilane + 4 NH4(+). Its pathway is porphyrin-containing compound metabolism; protoporphyrin-IX biosynthesis; coproporphyrinogen-III from 5-aminolevulinate: step 2/4. Functionally, tetrapolymerization of the monopyrrole PBG into the hydroxymethylbilane pre-uroporphyrinogen in several discrete steps. The sequence is that of Probable porphobilinogen deaminase from Methanosarcina acetivorans (strain ATCC 35395 / DSM 2834 / JCM 12185 / C2A).